A 465-amino-acid chain; its full sequence is Na(+)-translocating NADH-quinone reductase subunit A (465 aa).

This sequence belongs to the NqrA family. As to quaternary structure, composed of six subunits; NqrA, NqrB, NqrC, NqrD, NqrE and NqrF.

It carries out the reaction a ubiquinone + n Na(+)(in) + NADH + H(+) = a ubiquinol + n Na(+)(out) + NAD(+). Its function is as follows. NQR complex catalyzes the reduction of ubiquinone-1 to ubiquinol by two successive reactions, coupled with the transport of Na(+) ions from the cytoplasm to the periplasm. NqrA to NqrE are probably involved in the second step, the conversion of ubisemiquinone to ubiquinol. In Chlamydia trachomatis serovar L2 (strain ATCC VR-902B / DSM 19102 / 434/Bu), this protein is Na(+)-translocating NADH-quinone reductase subunit A.